We begin with the raw amino-acid sequence, 121 residues long: Large ribosomal subunit protein bL20 (121 aa).

This sequence belongs to the bacterial ribosomal protein bL20 family.

Functionally, binds directly to 23S ribosomal RNA and is necessary for the in vitro assembly process of the 50S ribosomal subunit. It is not involved in the protein synthesizing functions of that subunit. The protein is Large ribosomal subunit protein bL20 of Wolbachia sp. subsp. Drosophila simulans (strain wRi).